A 270-amino-acid chain; its full sequence is Protein MGF 110-1L (270 aa).

Positions 1-26 are cleaved as a signal peptide; sequence MLGLQIFTLLSIPTLLYTYEIEPLER. Residues 27–117 are Extracellular-facing; the sequence is TSTPPEKEFG…HERHEADIRK (91 aa). The A repeat unit spans residues 27–146; it reads TSTPPEKEFG…YIRKRSLQTV (120 aa). Asparagine 75 carries N-linked (GlcNAc...) asparagine; by host glycosylation. The chain crosses the membrane as a helical span at residues 118–138; it reads WQKLLTYGFYLAGCILAVNYI. Residues 139–145 are Cytoplasmic-facing; it reads RKRSLQT. The helical transmembrane segment at 146–166 threads the bilayer; the sequence is VMYLLVFLVISFLLSQLMLYG. Residues 147–270 form a B repeat; that stretch reads MYLLVFLVIS…DNLMKKQDIM (124 aa). The Extracellular portion of the chain corresponds to 167-270; the sequence is ELEDKKHKIG…DNLMKKQDIM (104 aa).

The protein belongs to the asfivirus MGF 110 family.

The protein resides in the membrane. Functionally, plays a role in virus cell tropism, and may be required for efficient virus replication in macrophages. This African swine fever virus (isolate Pig/Portugal/OURT88/1988) (ASFV) protein is Protein MGF 110-1L.